The following is a 582-amino-acid chain: 2-succinyl-5-enolpyruvyl-6-hydroxy-3-cyclohexene-1-carboxylate synthase (582 aa).

It belongs to the TPP enzyme family. MenD subfamily. As to quaternary structure, homodimer. Mg(2+) is required as a cofactor. Mn(2+) serves as cofactor. It depends on thiamine diphosphate as a cofactor.

The catalysed reaction is isochorismate + 2-oxoglutarate + H(+) = 5-enolpyruvoyl-6-hydroxy-2-succinyl-cyclohex-3-ene-1-carboxylate + CO2. It participates in quinol/quinone metabolism; 1,4-dihydroxy-2-naphthoate biosynthesis; 1,4-dihydroxy-2-naphthoate from chorismate: step 2/7. Its pathway is cofactor biosynthesis; phylloquinone biosynthesis. Its function is as follows. Catalyzes the thiamine diphosphate-dependent decarboxylation of 2-oxoglutarate and the subsequent addition of the resulting succinic semialdehyde-thiamine pyrophosphate anion to isochorismate to yield 2-succinyl-5-enolpyruvyl-6-hydroxy-3-cyclohexene-1-carboxylate (SEPHCHC). This Trichodesmium erythraeum (strain IMS101) protein is 2-succinyl-5-enolpyruvyl-6-hydroxy-3-cyclohexene-1-carboxylate synthase.